Here is a 273-residue protein sequence, read N- to C-terminus: Large ribosomal subunit protein uL2cy (273 aa).

Disordered stretches follow at residues Met-1–Val-22 and Asn-224–Lys-273.

The protein belongs to the universal ribosomal protein uL2 family. As to quaternary structure, part of the 50S ribosomal subunit.

The protein resides in the plastid. It localises to the chloroplast. The sequence is that of Large ribosomal subunit protein uL2cy (rpl2-B) from Chloranthus spicatus (Chulantree).